Reading from the N-terminus, the 757-residue chain is E3 ubiquitin-protein ligase SMURF1 (757 aa).

Residues 1 to 120 form the C2 domain; that stretch reads MSNPGTRRNG…TGYQRLDLCK (120 aa). Positions 193–237 are disordered; sequence GNCRFVESPSQDQRLQAQRLRNPDVRGSLQTPQNRPHGHQSPELP. Ser200 carries the phosphoserine modification. WW domains lie at 234 to 267 and 306 to 339; these read PELP…DPRI and GPLP…DPRL. Glycyl lysine isopeptide (Lys-Gly) (interchain with G-Cter in ubiquitin) cross-links involve residues Lys381 and Lys383. Residues 420-757 enclose the HECT domain; the sequence is RPKDLKKRLM…VEETCGFAVE (338 aa). Cys725 acts as the Glycyl thioester intermediate in catalysis.

As to quaternary structure, interacts with TRAF4. Interacts (via HECT domain) with FBXL15 (via LRR repeats). Interacts with SMAD7 and TGFBR1; SMAD7 recruits SMURF1 to TGFBR1 and regulates TGF-beta receptor degradation. Interacts with MAVS; the interaction is mediated by NDFIP1. Post-translationally, auto-ubiquitinated in presence of NDFIP1. Ubiquitinated by the SCF(FBXL15) complex at Lys-381 and Lys-383, leading to its degradation by the proteasome. Lys-383 is the primary ubiquitination site. Expressed in melanocytes.

The protein localises to the cytoplasm. It localises to the cell membrane. It catalyses the reaction S-ubiquitinyl-[E2 ubiquitin-conjugating enzyme]-L-cysteine + [acceptor protein]-L-lysine = [E2 ubiquitin-conjugating enzyme]-L-cysteine + N(6)-ubiquitinyl-[acceptor protein]-L-lysine.. It functions in the pathway protein modification; protein ubiquitination. Its function is as follows. E3 ubiquitin-protein ligase that acts as a negative regulator of BMP signaling pathway. Mediates ubiquitination and degradation of SMAD1 and SMAD5, 2 receptor-regulated SMADs specific for the BMP pathway. Promotes ubiquitination and subsequent proteasomal degradation of TRAF family members and RHOA. Promotes ubiquitination and subsequent proteasomal degradation of MAVS. Acts as an antagonist of TGF-beta signaling by ubiquitinating TGFBR1 and targeting it for degradation. Plays a role in dendrite formation by melanocytes. In Homo sapiens (Human), this protein is E3 ubiquitin-protein ligase SMURF1 (SMURF1).